A 279-amino-acid chain; its full sequence is MFPYVEDYDGYAVKRLMLENVDVLGYLSLGYLALVWKGPAVVRRLNGETNRVSNSGLLRYAIIVWNLLLSAFSFFGMIVVVPAFLTRISQRGMLRALCGNNDEMFYRSSAGFWIGMFVLSKAPELVDTMFLLLQGKTPPFLHWYHHVTVLIFSWHTYCDHTSTMVLFAAMNLTVHFIMYFYFAMCACGFKKTMRKFAPFITMLQILQMVVGSLVTTYSAYKVYTTPEGAAPGCHVSRANARMGVIMYMSYLYLFSEMFLNSYARPKKPVADPTAAGKKV.

7 consecutive transmembrane segments (helical) span residues 16–36 (LMLE…ALVW), 61–81 (AIIV…IVVV), 112–132 (FWIG…MFLL), 138–158 (PPFL…HTYC), 164–184 (MVLF…YFAM), 196–216 (FAPF…LVTT), and 242–262 (MGVI…LNSY). Positions 142–146 (HWYHH) match the HxxHH motif motif. His-145 functions as the Nucleophile in the catalytic mechanism.

The protein belongs to the ELO family.

It localises to the endoplasmic reticulum membrane. It catalyses the reaction an acyl-CoA + malonyl-CoA + H(+) = a 3-oxoacyl-CoA + CO2 + CoA. Its pathway is lipid metabolism; fatty acid biosynthesis. Functionally, involved in the synthesis of fatty acids. Elongates C10 fatty acids to C14. Required for the maintenance of the global lipidome profile in this parasite. This chain is Fatty acid elongase 2, found in Trypanosoma cruzi (strain CL Brener).